Reading from the N-terminus, the 553-residue chain is Putative transport protein YidE (553 aa).

Transmembrane regions (helical) follow at residues 4 to 24 (IALTVSILALVAVVGLFIGNV), 28 to 48 (GVGLGIGGVLFGGIIVGHFVS), 65 to 85 (FGLILFVYTIGIQVGPGFFAS), 95 to 115 (LFAVLIVIIGGLVTAILHKLF), and 158 to 178 (MSYAMAYPFGICGILFTMWML). 2 consecutive RCK C-terminal domains span residues 191–276 (QQHE…VIGQ) and 279–361 (DTSL…VLGN). 6 helical membrane-spanning segments follow: residues 371–391 (MLPVFIGIGLGVLLGSIPVFV), 393–413 (GFPAALKLGLAGGPLIMALIL), 439–459 (IVLFLSVVGLKSGGDFIHTLV), 464–484 (LSWIGYGALITAVPLITVGIL), 493–513 (YLTMCGMLAGSMTDPPALAFA), and 533–553 (LVMFLRIITPQLLAVLFWSIG).

The protein belongs to the AAE transporter (TC 2.A.81) family. YidE subfamily.

The protein localises to the cell membrane. This is Putative transport protein YidE from Escherichia coli O6:H1 (strain CFT073 / ATCC 700928 / UPEC).